Reading from the N-terminus, the 179-residue chain is MARLREFYKETVVPELVKQFGYKSVMEVPRIEKITLNMGVGEAIADKKVMEHAVSDLEKIAGQKPVVTVARKSIAGFKIRDNYPVGCKVTLRRDQMFEFLDRLITIALPRVRDFRGVSGKSFDGRGNYNMGVREQIIFPEIEYDKIDALRGLNITITTTAKTDEEAKALLSLFKFPFKG.

Belongs to the universal ribosomal protein uL5 family. As to quaternary structure, part of the 50S ribosomal subunit; part of the 5S rRNA/L5/L18/L25 subcomplex. Contacts the 5S rRNA and the P site tRNA. Forms a bridge to the 30S subunit in the 70S ribosome.

Its function is as follows. This is one of the proteins that bind and probably mediate the attachment of the 5S RNA into the large ribosomal subunit, where it forms part of the central protuberance. In the 70S ribosome it contacts protein S13 of the 30S subunit (bridge B1b), connecting the 2 subunits; this bridge is implicated in subunit movement. Contacts the P site tRNA; the 5S rRNA and some of its associated proteins might help stabilize positioning of ribosome-bound tRNAs. This chain is Large ribosomal subunit protein uL5, found in Neisseria meningitidis serogroup A / serotype 4A (strain DSM 15465 / Z2491).